The sequence spans 207 residues: Riboflavin synthase (207 aa).

Lumazine-binding repeat units follow at residues 1–94 and 95–191; these read MFTG…LGGH and IVQG…INYL. 2,4-dihydroxypteridine-binding positions include 4–6, 45–47, 59–64, 98–100, Lys133, 142–144, and 156–161; these read GLV, CLT, DVSPET, GHV, SLT, and NIIPHT.

In terms of assembly, homotrimer.

It carries out the reaction 2 6,7-dimethyl-8-(1-D-ribityl)lumazine + H(+) = 5-amino-6-(D-ribitylamino)uracil + riboflavin. Its pathway is cofactor biosynthesis; riboflavin biosynthesis; riboflavin from 2-hydroxy-3-oxobutyl phosphate and 5-amino-6-(D-ribitylamino)uracil: step 2/2. Its function is as follows. Catalyzes the dismutation of two molecules of 6,7-dimethyl-8-ribityllumazine, resulting in the formation of riboflavin and 5-amino-6-(D-ribitylamino)uracil. This Aquifex aeolicus (strain VF5) protein is Riboflavin synthase (ribE).